The following is a 180-amino-acid chain: MSTNAIARRYAKALVQIGAEEGQVDKFNSELTQFNTVLAANAGLTSVFSNPAYGIEAKREILKEIIGKLALSESVAKFLQLLLDRSRLAFLPQITESYGNFADDLSGVVRPTLTSGLPLEESQIEEIKTSLTKTTGKKVMLKVQVDPSLIGGVVTKIGDKVFDGSVKTQLAKIQDILQKG.

Belongs to the ATPase delta chain family. As to quaternary structure, F-type ATPases have 2 components, F(1) - the catalytic core - and F(0) - the membrane proton channel. F(1) has five subunits: alpha(3), beta(3), gamma(1), delta(1), epsilon(1). F(0) has three main subunits: a(1), b(2) and c(10-14). The alpha and beta chains form an alternating ring which encloses part of the gamma chain. F(1) is attached to F(0) by a central stalk formed by the gamma and epsilon chains, while a peripheral stalk is formed by the delta and b chains.

The protein localises to the cell inner membrane. F(1)F(0) ATP synthase produces ATP from ADP in the presence of a proton or sodium gradient. F-type ATPases consist of two structural domains, F(1) containing the extramembraneous catalytic core and F(0) containing the membrane proton channel, linked together by a central stalk and a peripheral stalk. During catalysis, ATP synthesis in the catalytic domain of F(1) is coupled via a rotary mechanism of the central stalk subunits to proton translocation. In terms of biological role, this protein is part of the stalk that links CF(0) to CF(1). It either transmits conformational changes from CF(0) to CF(1) or is implicated in proton conduction. This Geotalea uraniireducens (strain Rf4) (Geobacter uraniireducens) protein is ATP synthase subunit delta.